The chain runs to 407 residues: D-mannose isomerase (407 aa).

Active-site proton donor/acceptor residues include histidine 251 and histidine 383.

It belongs to the N-acylglucosamine 2-epimerase family. Homodimer.

The catalysed reaction is D-mannose = D-fructose. It catalyses the reaction D-lyxose = D-xylulose. Its activity is regulated as follows. Significantly inhibited by divalent metal ions such as Cu(2+), Cd(2+) or Ca(2+). Its function is as follows. Catalyzes the reversible isomerization of D-mannose to D-fructose. Shows weaker activity on D-lyxose, but cannot use N-acetyl D-glucosamine. The protein is D-mannose isomerase of Thermobifida fusca (Thermomonospora fusca).